Reading from the N-terminus, the 417-residue chain is Guanine nucleotide-exchange factor SEC12 (417 aa).

Residues 1-388 (MGRRRGVELY…QLHLLPSRRS (388 aa)) are Cytoplasmic-facing. A 3'-nitrotyrosine modification is found at tyrosine 10. The segment at 101–135 (KGSKAEKSGSKEQGPRQRKGAPPAEKKSGAQVHPE) is disordered. The span at 103-115 (SKAEKSGSKEQGP) shows a compositional bias: basic and acidic residues. WD repeat units lie at residues 152–191 (SNEP…KVLE), 194–232 (AHEG…TQLQ), and 298–337 (CGHE…RLYY). Residues 389–409 (VPVWLLLLLCVGLIIVTILLL) traverse the membrane as a helical segment. Residues 410-417 (QTAFPGFL) lie on the Lumenal side of the membrane.

As to quaternary structure, interacts with SAR1B (GDP-bound form). Interacts with MIA2; recruits PREB to endoplasmic reticulum exit sites. Interacts with CIDEB; facilitating loading of SCAP-SREBP into COPII vesicles.

The protein localises to the endoplasmic reticulum membrane. It is found in the nucleus. Guanine nucleotide exchange factor (GEF) that regulates the assembly of the coat protein complex II/COPII in endoplasmic reticulum (ER) to Golgi vesicle-mediated transport. Selectively activates SAR1A and SAR1B by promoting the exchange of guanosine diphosphate (GDP) for guanosine triphosphate (GTP) in these small GTPases. In their activated GTP-bound state, SAR1A and SAR1B insert into the membrane of the endoplasmic reticulum where they recruit the remainder of the coat protein complex II/COPII which is responsible for both the sorting of proteins and the deformation and budding of membranes into vesicles destined to the Golgi. Functionally, was first identified based on its probable role in the regulation of pituitary gene transcription. Binds to the prolactin gene (PRL) promoter and seems to activate transcription. This chain is Guanine nucleotide-exchange factor SEC12, found in Mus musculus (Mouse).